The primary structure comprises 130 residues: uncharacterized protein (130 aa).

This is an uncharacterized protein from Acanthamoeba polyphaga mimivirus (APMV).